Reading from the N-terminus, the 293-residue chain is MPWIQLRINTNSDDAETISDLLMEEGSVSITFEDGKDTPIFEPKLGETPLWRDTVVVALFEADTDLTPTIEMLKTLPFLGDNFSHKIEQIEDKDWVREWMDNFHPIQFGSRLWICPSWREIPDPTAVNVILDPGLAFGTGTHPTTALCLEWLDSLDLSNEEVIDFGCGSGILAVAALKLGAKKVTGIDIDYQAIDASRANAERNNVADKLALYLPEDQPADLKADVLVANILAGPLRELAPLIAERVKSGGKLALSGLLKEQAQEISDFYSQWFDMDEAAHKEDWSRLTGKRK.

Residues threonine 145, glycine 166, aspartate 188, and asparagine 230 each coordinate S-adenosyl-L-methionine.

The protein belongs to the methyltransferase superfamily. PrmA family.

The protein resides in the cytoplasm. The catalysed reaction is L-lysyl-[protein] + 3 S-adenosyl-L-methionine = N(6),N(6),N(6)-trimethyl-L-lysyl-[protein] + 3 S-adenosyl-L-homocysteine + 3 H(+). Functionally, methylates ribosomal protein L11. The sequence is that of Ribosomal protein L11 methyltransferase from Shewanella putrefaciens (strain CN-32 / ATCC BAA-453).